Reading from the N-terminus, the 276-residue chain is Large ribosomal subunit protein uL2 (276 aa).

A disordered region spans residues V224–K276. The span at K258–K276 shows a compositional bias: basic residues.

It belongs to the universal ribosomal protein uL2 family. Part of the 50S ribosomal subunit. Forms a bridge to the 30S subunit in the 70S ribosome.

In terms of biological role, one of the primary rRNA binding proteins. Required for association of the 30S and 50S subunits to form the 70S ribosome, for tRNA binding and peptide bond formation. It has been suggested to have peptidyltransferase activity; this is somewhat controversial. Makes several contacts with the 16S rRNA in the 70S ribosome. The sequence is that of Large ribosomal subunit protein uL2 from Geobacillus sp. (strain WCH70).